A 169-amino-acid chain; its full sequence is Peptide deformylase 1 (169 aa).

Residues cysteine 91 and histidine 133 each coordinate Fe cation. Glutamate 134 is an active-site residue. Residue histidine 137 participates in Fe cation binding.

It belongs to the polypeptide deformylase family. It depends on Fe(2+) as a cofactor.

The catalysed reaction is N-terminal N-formyl-L-methionyl-[peptide] + H2O = N-terminal L-methionyl-[peptide] + formate. Functionally, removes the formyl group from the N-terminal Met of newly synthesized proteins. Requires at least a dipeptide for an efficient rate of reaction. N-terminal L-methionine is a prerequisite for activity but the enzyme has broad specificity at other positions. This chain is Peptide deformylase 1, found in Vibrio cholerae serotype O1 (strain ATCC 39315 / El Tor Inaba N16961).